Consider the following 687-residue polypeptide: Acetyl-coenzyme A synthetase 2 (687 aa).

Residues 206–209 and Thr325 contribute to the CoA site; that span reads RGGK. ATP is bound by residues 401 to 403, 425 to 430, Asp516, and Arg531; these read GEP and DTMWQT. Residue Ser539 participates in CoA binding. Arg542 is an ATP binding site. CoA is bound at residue Arg617.

The protein belongs to the ATP-dependent AMP-binding enzyme family.

It carries out the reaction acetate + ATP + CoA = acetyl-CoA + AMP + diphosphate. This is Acetyl-coenzyme A synthetase 2 (ACS2) from Eremothecium gossypii (strain ATCC 10895 / CBS 109.51 / FGSC 9923 / NRRL Y-1056) (Yeast).